We begin with the raw amino-acid sequence, 238 residues long: Cysteine-rich venom protein 1 (238 aa).

The signal sequence occupies residues 1 to 19; that stretch reads MIAFIVLLSLAAVLQQSSG. An SCP domain is found at 38 to 164; the sequence is VDKHNALRRS…STKYLYVCQY (127 aa). Cystine bridges form between cysteine 75/cysteine 153, cysteine 92/cysteine 165, cysteine 148/cysteine 162, cysteine 184/cysteine 191, cysteine 187/cysteine 196, cysteine 200/cysteine 233, cysteine 209/cysteine 227, and cysteine 218/cysteine 231. One can recognise a ShKT domain in the interval 200 to 233; that stretch reads CEYEDTFSNCKALAKKTKCKTEWIKSKCPATCFC.

It belongs to the CRISP family. In terms of tissue distribution, expressed by the venom gland.

The protein localises to the secreted. Functionally, blocks contraction of smooth muscle elicited by high potassium-induced depolarization, but does not block caffeine-stimulated contraction. May target voltage-gated calcium channels on smooth muscle. The sequence is that of Cysteine-rich venom protein 1 from Hydrophis hardwickii (Hardwick's spine-bellied seasnake).